We begin with the raw amino-acid sequence, 201 residues long: Small ribosomal subunit protein uS4c (201 aa).

The disordered stretch occupies residues 15-43; it reads LGALPGLTNKRPRAGSDLRNQSRSGKKSQ. Residues 89 to 152 form the S4 RNA-binding domain; that stretch reads MRLDNILFRL…NSRTLIQNSL (64 aa).

Belongs to the universal ribosomal protein uS4 family. As to quaternary structure, part of the 30S ribosomal subunit. Contacts protein S5. The interaction surface between S4 and S5 is involved in control of translational fidelity.

It localises to the plastid. The protein localises to the chloroplast. One of the primary rRNA binding proteins, it binds directly to 16S rRNA where it nucleates assembly of the body of the 30S subunit. Its function is as follows. With S5 and S12 plays an important role in translational accuracy. This is Small ribosomal subunit protein uS4c (rps4) from Panax ginseng (Korean ginseng).